Consider the following 577-residue polypeptide: Urease subunit alpha (577 aa).

The Urease domain maps to 136–577; that stretch reads GTVDCHVHLI…LPMTQRYFLF (442 aa). Residues His141, His143, and Lys224 each coordinate Ni(2+). Residue Lys224 is modified to N6-carboxylysine. A substrate-binding site is contributed by His226. Ni(2+) is bound by residues His253 and His279. Residue His327 is the Proton donor of the active site. Position 367 (Asp367) interacts with Ni(2+).

This sequence belongs to the metallo-dependent hydrolases superfamily. Urease alpha subunit family. Heterotrimer of UreA (gamma), UreB (beta) and UreC (alpha) subunits. Three heterotrimers associate to form the active enzyme. The cofactor is Ni cation. Carboxylation allows a single lysine to coordinate two nickel ions.

The protein localises to the cytoplasm. The catalysed reaction is urea + 2 H2O + H(+) = hydrogencarbonate + 2 NH4(+). The protein operates within nitrogen metabolism; urea degradation; CO(2) and NH(3) from urea (urease route): step 1/1. The polypeptide is Urease subunit alpha (Mycobacterium bovis (strain ATCC BAA-935 / AF2122/97)).